Consider the following 408-residue polypeptide: Probable serine/threonine-protein kinase PBL16 (408 aa).

Glycine 2 carries N-myristoyl glycine lipidation. Cysteine 4 carries S-palmitoyl cysteine lipidation. Residues 17–50 (ANAKSESPKEQSPTVEDKHIKEVQKLPSNPKEVE) form a disordered region. Residues 18–30 (NAKSESPKEQSPT) are compositionally biased toward polar residues. Basic and acidic residues predominate over residues 31–40 (VEDKHIKEVQ). Phosphothreonine is present on threonine 65. Positions 76–360 (FRQDRVLGGG…DIVDSLEPLQ (285 aa)) constitute a Protein kinase domain. ATP contacts are provided by residues 82 to 90 (LGGGGFGSV) and lysine 113. Tyrosine 159 carries the phosphotyrosine modification. The Proton acceptor role is filled by aspartate 209. A phosphoserine mark is found at serine 213 and serine 243. Phosphothreonine occurs at positions 244 and 249. At tyrosine 257 the chain carries Phosphotyrosine.

It belongs to the protein kinase superfamily. Ser/Thr protein kinase family. Palmitoylation at Cys-4 and Cys-6 are required for plasma membrane location.

It is found in the cell membrane. It catalyses the reaction L-seryl-[protein] + ATP = O-phospho-L-seryl-[protein] + ADP + H(+). It carries out the reaction L-threonyl-[protein] + ATP = O-phospho-L-threonyl-[protein] + ADP + H(+). In terms of biological role, may be involved in plant defense signaling. The protein is Probable serine/threonine-protein kinase PBL16 of Arabidopsis thaliana (Mouse-ear cress).